Reading from the N-terminus, the 177-residue chain is MKTRIHVVQGDITKLAVDVIVNAANPSLMGGGGVDGAIHRAAGPALLDACLKVRQQQGDCPTGHAVITLAGDLPAKAVVHTVGPVWRGGEQNEDQLLQDAYLNSLRLVAANSYTSVAFPAISTGVYGYPRAAAAEIAVKTVSEFITRHALPEQVYFVCYDEENAHLYERLLTQQGDE.

The 175-residue stretch at 1-175 (MKTRIHVVQG…LYERLLTQQG (175 aa)) folds into the Macro domain. Residues 11–12 (DI), Asn-25, 33–35 (GVD), and 122–126 (STGVY) each bind substrate. Asp-35 functions as the Proton acceptor in the catalytic mechanism.

Belongs to the MacroD-type family. YmdB subfamily. In terms of assembly, homodimer. Interacts with RNase III.

The catalysed reaction is 3''-O-acetyl-ADP-D-ribose + H2O = ADP-D-ribose + acetate + H(+). The enzyme catalyses 2''-O-acetyl-ADP-D-ribose + H2O = ADP-D-ribose + acetate + H(+). Its function is as follows. Deacetylates O-acetyl-ADP ribose to yield ADP-ribose and free acetate. Down-regulates ribonuclease 3 (RNase III) activity. Acts by interacting directly with the region of the ribonuclease that is required for dimerization/activation. This Escherichia coli O157:H7 protein is O-acetyl-ADP-ribose deacetylase.